The chain runs to 147 residues: Large ribosomal subunit protein uL13 (147 aa).

It belongs to the universal ribosomal protein uL13 family. Part of the 50S ribosomal subunit.

This protein is one of the early assembly proteins of the 50S ribosomal subunit, although it is not seen to bind rRNA by itself. It is important during the early stages of 50S assembly. This Streptomyces avermitilis (strain ATCC 31267 / DSM 46492 / JCM 5070 / NBRC 14893 / NCIMB 12804 / NRRL 8165 / MA-4680) protein is Large ribosomal subunit protein uL13.